The chain runs to 534 residues: Probable protein kinase UbiB (534 aa).

A helical membrane pass occupies residues 23–43; sequence DLLFDLPLPWFLLALRFALPW. One can recognise a Protein kinase domain in the interval 125-492; that stretch reads RFDIEPLASA…WHKRKDDWFL (368 aa). ATP contacts are provided by residues 131-139 and K153; that span reads LASASVAQV. D288 functions as the Proton acceptor in the catalytic mechanism. The next 2 membrane-spanning stretches (helical) occupy residues 490 to 510 and 512 to 532; these read WFLRLLGTAHLGGGAVLAAGG and LHELGHWPAGIMIAVGLYLIV.

Belongs to the ABC1 family. UbiB subfamily.

It is found in the cell inner membrane. The protein operates within cofactor biosynthesis; ubiquinone biosynthesis [regulation]. Is probably a protein kinase regulator of UbiI activity which is involved in aerobic coenzyme Q (ubiquinone) biosynthesis. This chain is Probable protein kinase UbiB, found in Pseudomonas fluorescens (strain ATCC BAA-477 / NRRL B-23932 / Pf-5).